A 707-amino-acid chain; its full sequence is Elongation factor G (707 aa).

A tr-type G domain is found at 8–296 (ERYRNFGIMA…AVVDFLPAPT (289 aa)). Residues 17 to 24 (AHIDAGKT), 94 to 98 (DTPGH), and 148 to 151 (NKMD) each bind GTP.

This sequence belongs to the TRAFAC class translation factor GTPase superfamily. Classic translation factor GTPase family. EF-G/EF-2 subfamily.

The protein localises to the cytoplasm. In terms of biological role, catalyzes the GTP-dependent ribosomal translocation step during translation elongation. During this step, the ribosome changes from the pre-translocational (PRE) to the post-translocational (POST) state as the newly formed A-site-bound peptidyl-tRNA and P-site-bound deacylated tRNA move to the P and E sites, respectively. Catalyzes the coordinated movement of the two tRNA molecules, the mRNA and conformational changes in the ribosome. The sequence is that of Elongation factor G from Paracoccus denitrificans (strain Pd 1222).